The following is a 206-amino-acid chain: Ribonuclease HII (206 aa).

An RNase H type-2 domain is found at 1–206; the sequence is MKVLGIDEAG…SWATVQKKKQ (206 aa). A divalent metal cation contacts are provided by aspartate 7, glutamate 8, and aspartate 105.

The protein belongs to the RNase HII family. It depends on Mn(2+) as a cofactor. Mg(2+) serves as cofactor.

The protein resides in the cytoplasm. It catalyses the reaction Endonucleolytic cleavage to 5'-phosphomonoester.. Endonuclease that specifically degrades the RNA of RNA-DNA hybrids. The chain is Ribonuclease HII (rnhB) from Methanothermobacter thermautotrophicus (strain ATCC 29096 / DSM 1053 / JCM 10044 / NBRC 100330 / Delta H) (Methanobacterium thermoautotrophicum).